A 277-amino-acid chain; its full sequence is Cis-3,4-dihydrophenanthrene-3,4-diol dehydrogenase (277 aa).

NAD(+) is bound by residues 10–37 (FLTGGVAGLGRALVKRLVEEGANVTVLD) and Asp60. Ser143 provides a ligand contact to substrate. The active-site Proton acceptor is Tyr156. Residue Lys160 coordinates NAD(+).

Belongs to the short-chain dehydrogenases/reductases (SDR) family. As to quaternary structure, homotetramer.

It catalyses the reaction (3S,4R)-3,4-dihydrophenanthrene-3,4-diol + NAD(+) = phenanthrene-3,4-diol + NADH + H(+). With respect to regulation, inhibited by heavy metal such as Hg(2+) and by p-chloromercuribenzoate. In terms of biological role, involved in the degradation of phenanthrene. Catalyzes the oxidation of cis-phenanthrene dihydrodiol (PDD) to yield phenanthrenediol. It can use either NAD or NADP as electron acceptor, however NAD is preferred to NADP. This Alcaligenes faecalis protein is Cis-3,4-dihydrophenanthrene-3,4-diol dehydrogenase (phnB).